A 439-amino-acid chain; its full sequence is Enolase (439 aa).

Substrate contacts are provided by His157 and Glu166. Catalysis depends on Glu209, which acts as the Proton donor. The Mg(2+) site is built by Asp244, Glu297, and Asp324. Substrate is bound by residues Glu297 and Asp324. Lys349 acts as the Proton acceptor in catalysis. Substrate contacts are provided by residues 376–379 (SHRS) and Lys400.

This sequence belongs to the enolase family. As to quaternary structure, homodimer. Requires Mg(2+) as cofactor.

The protein resides in the cytoplasm. The enzyme catalyses (2R)-2-phosphoglycerate = phosphoenolpyruvate + H2O. It participates in carbohydrate degradation; glycolysis; pyruvate from D-glyceraldehyde 3-phosphate: step 4/5. The chain is Enolase (ENOL) from Mastigamoeba balamuthi (Phreatamoeba balamuthi).